The following is a 435-amino-acid chain: Histidinol dehydrogenase (435 aa).

The NAD(+) site is built by Y131, Q189, and N212. Positions 238, 260, and 263 each coordinate substrate. Residues Q260 and H263 each coordinate Zn(2+). Active-site proton acceptor residues include E327 and H328. Substrate contacts are provided by H328, D361, E415, and H420. D361 provides a ligand contact to Zn(2+). H420 contributes to the Zn(2+) binding site.

The protein belongs to the histidinol dehydrogenase family. As to quaternary structure, homodimer. Zn(2+) serves as cofactor.

It catalyses the reaction L-histidinol + 2 NAD(+) + H2O = L-histidine + 2 NADH + 3 H(+). The protein operates within amino-acid biosynthesis; L-histidine biosynthesis; L-histidine from 5-phospho-alpha-D-ribose 1-diphosphate: step 9/9. In terms of biological role, catalyzes the sequential NAD-dependent oxidations of L-histidinol to L-histidinaldehyde and then to L-histidine. The chain is Histidinol dehydrogenase (hisD) from Buchnera aphidicola subsp. Schizaphis graminum (strain Sg).